Reading from the N-terminus, the 491-residue chain is Anthranilate synthase component 1 (491 aa).

L-tryptophan contacts are provided by residues Ser49 and 271-273 (PYL). 306 to 307 (GT) provides a ligand contact to chorismate. Glu333 is a binding site for Mg(2+). Chorismate contacts are provided by residues Tyr421, Arg441, 455–457 (GAG), and Gly457. Glu470 lines the Mg(2+) pocket.

The protein belongs to the anthranilate synthase component I family. As to quaternary structure, heterotetramer consisting of two non-identical subunits: a beta subunit (TrpG) and a large alpha subunit (TrpE). Requires Mg(2+) as cofactor.

It carries out the reaction chorismate + L-glutamine = anthranilate + pyruvate + L-glutamate + H(+). It participates in amino-acid biosynthesis; L-tryptophan biosynthesis; L-tryptophan from chorismate: step 1/5. Feedback inhibited by tryptophan. Part of a heterotetrameric complex that catalyzes the two-step biosynthesis of anthranilate, an intermediate in the biosynthesis of L-tryptophan. In the first step, the glutamine-binding beta subunit (TrpG) of anthranilate synthase (AS) provides the glutamine amidotransferase activity which generates ammonia as a substrate that, along with chorismate, is used in the second step, catalyzed by the large alpha subunit of AS (TrpE) to produce anthranilate. In the absence of TrpG, TrpE can synthesize anthranilate directly from chorismate and high concentrations of ammonia. The polypeptide is Anthranilate synthase component 1 (trpE) (Neisseria meningitidis serogroup B (strain ATCC BAA-335 / MC58)).